The primary structure comprises 661 residues: Pentatricopeptide repeat-containing protein At3g04750, mitochondrial (661 aa).

The transit peptide at 1 to 18 directs the protein to the mitochondrion; sequence MCFVLLLRRGFRLFGTEC. PPR repeat units lie at residues 99-131, 132-163, 165-195, 196-230, 231-265, 268-298, 299-333, 334-366, 367-401, 402-432, 433-467, 468-498, and 504-539; these read NVFV…RVSP, DRQT…GCLS, GNYL…MPHP, DVSS…GIEP, DEYT…GPVY, NLIL…MKKK, DMRS…DLVS, WNSL…KVKP, DRVT…QLKG, DAFL…ATEK, DVAL…GVTP, NNVT…MKDK, and ETEH…PSQS. A type E motif region spans residues 540–615; sequence MWGSILSACR…TAGYSSVVGV (76 aa). The interval 616 to 647 is type E(+) motif; that stretch reads EGLHRFVAAEKQNHPRWTEIKRILQHLYNEMK.

The protein belongs to the PPR family. PCMP-E subfamily.

It localises to the mitochondrion. This is Pentatricopeptide repeat-containing protein At3g04750, mitochondrial (PCMP-E81) from Arabidopsis thaliana (Mouse-ear cress).